Here is a 282-residue protein sequence, read N- to C-terminus: NADPH-dependent 7-cyano-7-deazaguanine reductase (282 aa).

Residue 88-90 participates in substrate binding; it reads IES. Residue 90 to 91 coordinates NADPH; that stretch reads SK. Cysteine 190 acts as the Thioimide intermediate in catalysis. Aspartate 197 functions as the Proton donor in the catalytic mechanism. Residue 229–230 coordinates substrate; the sequence is HE. An NADPH-binding site is contributed by 258–259; that stretch reads RG.

The protein belongs to the GTP cyclohydrolase I family. QueF type 2 subfamily. In terms of assembly, homodimer.

The protein localises to the cytoplasm. It carries out the reaction 7-aminomethyl-7-carbaguanine + 2 NADP(+) = 7-cyano-7-deazaguanine + 2 NADPH + 3 H(+). The protein operates within tRNA modification; tRNA-queuosine biosynthesis. Functionally, catalyzes the NADPH-dependent reduction of 7-cyano-7-deazaguanine (preQ0) to 7-aminomethyl-7-deazaguanine (preQ1). The protein is NADPH-dependent 7-cyano-7-deazaguanine reductase of Escherichia coli (strain SMS-3-5 / SECEC).